A 246-amino-acid polypeptide reads, in one-letter code: Transmembrane and ubiquitin-like domain-containing protein 1 (246 aa).

Positions 2–30 (ALIEGVGDEVTILFSALACLLVLALAWVS) are required to release iHOPS from membranes. The helical transmembrane segment at 11–31 (VTILFSALACLLVLALAWVST) threads the bilayer. The segment at 35–102 (EGADPLPQPS…PPPPDSPQEP (68 aa)) is disordered. The segment covering 40-50 (LPQPSGTPTPT) has biased composition (pro residues). Thr-71 and Thr-92 each carry phosphothreonine. Ser-98 and Ser-127 each carry phosphoserine. Residues 103-176 (LVLRLKFLND…LHCHVSTRVG (74 aa)) enclose the Ubiquitin-like domain. A run of 2 helical transmembrane segments spans residues 195–215 (VGSLLLPLLLLLLLLLWYCQI) and 221–241 (FPLTATLGLAGFTLLLSLLAF).

As to quaternary structure, interacts with EEF1A1, GRIA2, GRIP1, CAMLG, TUBG1. Interacts with NPM1 and CDKN2A; TMUB1 can enhance interaction between NPM1 and CDKN2A and is proposed to bridge the proteins; proposed to be mediated by iHOPS. Interacts with ERLIN2 and AMFR; TMUB1 promotes the interaction of ERLIN2 with AMFR. In terms of processing, processed by regulated intramembrane proteolysis (RIP) in the N-terminus to release iHOPS from membranes.

Its subcellular location is the membrane. The protein resides in the postsynaptic cell membrane. It is found in the recycling endosome. The protein localises to the cytoplasm. It localises to the nucleus. Its subcellular location is the nucleolus. The protein resides in the cytoskeleton. It is found in the microtubule organizing center. The protein localises to the centrosome. Its function is as follows. Involved in sterol-regulated ubiquitination and degradation of HMG-CoA reductase HMGCR. Involved in positive regulation of AMPA-selective glutamate receptor GRIA2 recycling to the cell surface. Acts as negative regulator of hepatocyte growth during regeneration. Functionally, may contribute to the regulation of translation during cell-cycle progression. May contribute to the regulation of cell proliferation. May be involved in centrosome assembly. Modulates stabilization and nucleolar localization of tumor suppressor CDKN2A and enhances association between CDKN2A and NPM1. The chain is Transmembrane and ubiquitin-like domain-containing protein 1 (TMUB1) from Bos taurus (Bovine).